Consider the following 395-residue polypeptide: Small RNA 2'-O-methyltransferase (395 aa).

Residues aspartate 79 and serine 115 each contribute to the S-adenosyl-L-methionine site. Mg(2+)-binding residues include glutamate 133, glutamate 136, histidine 137, and histidine 182.

This sequence belongs to the methyltransferase superfamily. HEN1 family. Requires Mg(2+) as cofactor. Specifically expressed in testis.

The protein localises to the cytoplasm. The catalysed reaction is small RNA 3'-end nucleotide + S-adenosyl-L-methionine = small RNA 3'-end 2'-O-methylnucleotide + S-adenosyl-L-homocysteine + H(+). Functionally, methyltransferase that adds a 2'-O-methyl group at the 3'-end of piRNAs, a class of 24 to 30 nucleotide RNAs that are generated by a Dicer-independent mechanism and are primarily derived from transposons and other repeated sequence elements. This probably protects the 3'-end of piRNAs from uridylation activity and subsequent degradation. Stabilization of piRNAs is essential for gametogenesis. This chain is Small RNA 2'-O-methyltransferase (Henmt1), found in Mus musculus (Mouse).